The chain runs to 418 residues: Imidazolonepropionase (418 aa).

Residues His-80 and His-82 each coordinate Fe(3+). Zn(2+)-binding residues include His-80 and His-82. Arg-89, Tyr-152, and His-185 together coordinate 4-imidazolone-5-propanoate. Tyr-152 provides a ligand contact to N-formimidoyl-L-glutamate. Position 250 (His-250) interacts with Fe(3+). Residue His-250 coordinates Zn(2+). Residue Gln-253 participates in 4-imidazolone-5-propanoate binding. Asp-325 is a binding site for Fe(3+). Asp-325 lines the Zn(2+) pocket. Residues Asn-327 and Gly-329 each contribute to the N-formimidoyl-L-glutamate site. A 4-imidazolone-5-propanoate-binding site is contributed by Ser-330.

It belongs to the metallo-dependent hydrolases superfamily. HutI family. Requires Zn(2+) as cofactor. It depends on Fe(3+) as a cofactor.

The protein resides in the cytoplasm. The catalysed reaction is 4-imidazolone-5-propanoate + H2O = N-formimidoyl-L-glutamate. It functions in the pathway amino-acid degradation; L-histidine degradation into L-glutamate; N-formimidoyl-L-glutamate from L-histidine: step 3/3. Catalyzes the hydrolytic cleavage of the carbon-nitrogen bond in imidazolone-5-propanoate to yield N-formimidoyl-L-glutamate. It is the third step in the universal histidine degradation pathway. The polypeptide is Imidazolonepropionase (Solibacter usitatus (strain Ellin6076)).